Consider the following 438-residue polypeptide: Transposon Ty2-C Gag polyprotein (438 aa).

3 stretches are compositionally biased toward polar residues: residues 1-11, 19-39, and 49-60; these read MESQQLHQNPR, ASVT…SASN, and KVNSQQETTPGT. Disordered stretches follow at residues 1 to 88, 365 to 397, and 419 to 438; these read MESQ…YQQH, NVSR…AKAH, and SSQY…TERI. The tract at residues 295–397 is RNA-binding; it reads ENNINVSDRL…SSKPRAAKAH (103 aa). Over residues 369–382 the composition is skewed to low complexity; it reads TSPNTTNTKVTTRN.

In terms of assembly, homotrimer.

The protein resides in the cytoplasm. Functionally, capsid protein (CA) is the structural component of the virus-like particle (VLP), forming the shell that encapsulates the retrotransposons dimeric RNA genome. The particles are assembled from trimer-clustered units and there are holes in the capsid shells that allow for the diffusion of macromolecules. CA also has nucleocapsid-like chaperone activity, promoting primer tRNA(i)-Met annealing to the multipartite primer-binding site (PBS), dimerization of Ty2 RNA and initiation of reverse transcription. This is Transposon Ty2-C Gag polyprotein (TY2A-C) from Saccharomyces cerevisiae (strain ATCC 204508 / S288c) (Baker's yeast).